We begin with the raw amino-acid sequence, 154 residues long: Melatonin receptor type 1A (154 aa).

The Cytoplasmic segment spans residues Y1–S19. Residues L20–M40 form a helical membrane-spanning segment. Topologically, residues G41–Y62 are extracellular. The helical transmembrane segment at T63 to L83 threads the bilayer. The Cytoplasmic segment spans residues R84–M115. The chain crosses the membrane as a helical span at residues F116 to V136. The Extracellular segment spans residues A137–E149.

It belongs to the G-protein coupled receptor 1 family.

It is found in the cell membrane. High affinity receptor for melatonin. Likely to mediate the reproductive and circadian actions of melatonin. The activity of this receptor is mediated by pertussis toxin sensitive G proteins that inhibit adenylate cyclase activity. In Sus scrofa (Pig), this protein is Melatonin receptor type 1A (MTNR1A).